The following is a 409-amino-acid chain: Peptidase T (409 aa).

Histidine 80 provides a ligand contact to Zn(2+). The active site involves aspartate 82. Position 143 (aspartate 143) interacts with Zn(2+). The Proton acceptor role is filled by glutamate 177. Zn(2+) is bound by residues glutamate 178, aspartate 200, and histidine 382.

This sequence belongs to the peptidase M20B family. Requires Zn(2+) as cofactor.

The protein resides in the cytoplasm. The catalysed reaction is Release of the N-terminal residue from a tripeptide.. Its function is as follows. Cleaves the N-terminal amino acid of tripeptides. This Alkaliphilus oremlandii (strain OhILAs) (Clostridium oremlandii (strain OhILAs)) protein is Peptidase T.